The sequence spans 119 residues: Small ribosomal subunit protein bS6 (119 aa).

The protein belongs to the bacterial ribosomal protein bS6 family.

Functionally, binds together with bS18 to 16S ribosomal RNA. In Buchnera aphidicola subsp. Baizongia pistaciae (strain Bp), this protein is Small ribosomal subunit protein bS6.